The following is a 302-amino-acid chain: F-box protein SKIP19 (302 aa).

Residues 16-63 (STNWTELPPELTSAILHRLGAIEILENAQKVCRSWRRVCKDPSMWRKI) form the F-box domain.

In terms of assembly, part of a SCF (ASK-cullin-F-box) protein ligase complex. Interacts with CUL1 and SPK1B/ASK2.

Its subcellular location is the nucleus. Its pathway is protein modification; protein ubiquitination. In terms of biological role, component of SCF(ASK-cullin-F-box) E3 ubiquitin ligase complexes, which may mediate the ubiquitination and subsequent proteasomal degradation of target proteins. This Arabidopsis thaliana (Mouse-ear cress) protein is F-box protein SKIP19 (SKIP19).